Consider the following 232-residue polypeptide: Thiamine import ATP-binding protein ThiQ (232 aa).

In terms of domain architecture, ABC transporter spans 2–230; the sequence is LKLTDITWLY…KASASALLGI (229 aa). 32–39 is a binding site for ATP; sequence GPSGAGKS.

Belongs to the ABC transporter superfamily. Thiamine importer (TC 3.A.1.19.1) family. As to quaternary structure, the complex is composed of two ATP-binding proteins (ThiQ), two transmembrane proteins (ThiP) and a solute-binding protein (ThiB).

The protein localises to the cell inner membrane. It carries out the reaction thiamine(out) + ATP + H2O = thiamine(in) + ADP + phosphate + H(+). In terms of biological role, part of the ABC transporter complex ThiBPQ involved in thiamine import. Responsible for energy coupling to the transport system. The polypeptide is Thiamine import ATP-binding protein ThiQ (Escherichia coli O6:H1 (strain CFT073 / ATCC 700928 / UPEC)).